The chain runs to 1370 residues: Putative Polycomb group protein ASXL2 (1370 aa).

Residues 11–86 form the HTH HARE-type domain; it reads RTWAEAAKTV…RMGVYTLKKD (76 aa). Positions 92 to 216 are disordered; that stretch reads KELSECSEES…DSVPAKPGQM (125 aa). Residues 103-120 show a composition bias toward low complexity; sequence DGQSDSHSSDNSSSSDGG. A compositionally biased stretch (pro residues) spans 141-152; that stretch reads PPSPPSGCPSPT. Ser150 carries the post-translational modification Phosphoserine. Residues 178–182 carry the Nuclear localization signal motif; the sequence is QQKKK. Residues 186–198 are compositionally biased toward polar residues; sequence CRPSMSISNQHLS. In terms of domain architecture, DEUBAD spans 229 to 338; that stretch reads PDSILVNTNL…FENYYGQSSG (110 aa). Residues 258 to 262 carry the LXXLL motif motif; the sequence is LLLLL. Disordered stretches follow at residues 340 to 487 and 516 to 535; these read SLED…AGLQ and QESLKRKSSLTDEEATSSWE. Basic and acidic residues predominate over residues 398–412; the sequence is QKEENQDEARPDSKS. A phosphoserine mark is found at Ser477, Ser524, Ser553, and Ser590. Arg594 bears the Asymmetric dimethylarginine mark. At Ser601 the chain carries Phosphoserine. A compositionally biased stretch (gly residues) spans 643-652; the sequence is IPGPGPGGGQ. Disordered stretches follow at residues 643–734, 805–891, and 1103–1175; these read IPGP…LASS, PKAG…SSIP, and GHAD…VSEQ. Polar residues-rich tracts occupy residues 719-734 and 830-839; these read AQLQQTSSVPTGLASS and MTSSPVTTAS. The segment covering 849–870 has biased composition (low complexity); that stretch reads SGTATSTGSAPSSSTLPAASSL. Polar residues predominate over residues 871-891; the sequence is KTPGTSANMNGPISRTSSSIP. The segment covering 1119–1131 has biased composition (acidic residues); that stretch reads DESDEDRVGDEQE. A phosphoserine mark is found at Ser1121 and Ser1254. The segment at 1332–1369 adopts a PHD-type; atypical zinc-finger fold; the sequence is PSKCYCRLKAMIMCKGCGAFCHDDCIGPSKLCVSCLVV.

It belongs to the Asx family. As to quaternary structure, core component of the polycomb repressive deubiquitinase (PR-DUB) complex, at least composed of BAP1, one of ASXL1, ASXL2 or (probably) ASXL3, and one of MBD5 or MBD6. Distinct combinations of ASXL and MBD proteins may preferentially bind specific histone modification marks. The PR-DUB core associates with a number of accessory proteins, including FOXK1, FOXK2, KDM1B, HCFC1 and OGT; KDM1B specifically associates with ASXL2 PR-DUB complexes. Interacts (via PHD domain) with MBD5 and MBD6 (via MBD domain); the interaction is probably direct and mediates association of MBD proteins with the PR-DUB core. Interacts with PPARA and PPARG.

Its subcellular location is the nucleus. Putative Polycomb group (PcG) protein. PcG proteins act by forming multiprotein complexes, which are required to maintain the transcriptionally repressive state of homeotic genes throughout development. PcG proteins are not required to initiate repression, but to maintain it during later stages of development. They probably act via methylation of histones, rendering chromatin heritably changed in its expressibility. Involved in transcriptional regulation mediated by ligand-bound nuclear hormone receptors, such as peroxisome proliferator-activated receptor gamma (PPARG). Acts as a coactivator for PPARG and enhances its adipocyte differentiation-inducing activity; the function seems to involve differential recruitment of acetylated and methylated histone H3. Non-catalytic component of the PR-DUB complex, a complex that specifically mediates deubiquitination of histone H2A monoubiquitinated at 'Lys-119' (H2AK119ub1). The PR-DUB complex is an epigenetic regulator of gene expression and acts as a transcriptional coactivator, affecting genes involved in development, cell communication, signaling, cell proliferation and cell viability. ASXL1, ASXL2 and ASXL3 function redundantly in the PR-DUB complex. The ASXL proteins are essential for chromatin recruitment and transcriptional activation of associated genes. ASXL1 and ASXL2 are important for BAP1 protein stability. The sequence is that of Putative Polycomb group protein ASXL2 (Asxl2) from Mus musculus (Mouse).